The sequence spans 83 residues: Beta/kappa-theraphotoxin-Cg2a (83 aa).

Residues 1–21 form the signal peptide; the sequence is MKASVFAVILGLVVLCACSFA. The propeptide occupies 22-53; the sequence is EDEQDQFVSPNELLKSMFVESRHEFTPEVEGR. 3 cysteine pairs are disulfide-bonded: cysteine 55–cysteine 69, cysteine 62–cysteine 74, and cysteine 68–cysteine 78. Isoleucine 82 is subject to Isoleucine amide.

This sequence belongs to the neurotoxin 30 (phrixotoxin) family. As to expression, expressed by the venom gland.

It localises to the secreted. In terms of biological role, this gating-modifier toxin shows an important inhibitory activity on sodium channels. It is very active on Nav1.7/SCN9A (IC(50)~0.6 nM), and also shows activity on Nav1.3/SCN3A (IC(50)=292 nM), Nav1.4/SCN4A (IC(50)=2.2-159 nM), and Nav1.5/SCN5A (IC(50)=2.3-2.9 uM). It has also been shown to inhibit tetrodotoxin (TTX)-resistant (IC(50)=27.6 nM) and TTX-sensitive (IC(50)=30.2 nM) sodium channels in rat dorsal root ganglion neurons. Lower inhibitory activity has also been shown on potassium channels: Kv4.2/KCND2 (IC(50)=604.2 nM), Kv4.3/KCND3 (IC(50)=425.1 nM), and Kv2.1/KCNB1 (IC(50)=14.3 uM). It binds to phospholipid membranes. Like its analog AM-8145, it may act by interacting only with the second voltage-sensor domain of Nav1.7/SCN9A. The polypeptide is Beta/kappa-theraphotoxin-Cg2a (Chilobrachys guangxiensis (Chinese earth tiger tarantula)).